The primary structure comprises 1212 residues: MSSNLEDLLWQQILSMDPAELLSDNAISSTCDENIAAGHHFTQSPHVEMSVQSTTSAGHTGVMTTQSQFSNGVRDQNRESLSTLTGLSLESINNQINVQPTQMTFQPISPPMQGQNYVYSNNMINPIKPRSIIKSHGHSMGEMSFADHSLYVNAQPPVQQPQLKSLVGMHPCMTATSQGKYQTNKTVGPPSISASQITTGNAGIRPGEYQSVHNQSSVNGSKSYEITTASGDEWILTTPGGQSWTLKRNPPNPPNNRTNSVVNKAQQVSHAQPYVSGSSDGFYQGAALQSCAYVNTPGFTPVCETQNMNNSQATQLSASMNCINALQTTMDAIVTSTSKPVGAVSNNRGANFGMGGMENYMDNNSPWNQYCKVQDIVSQNCSQGKVVSSTPGIAPNLMKGNGLNVYGHVGCVDAAISDKQGGTANVASSLLNPEHQDWMRVTGTSTNLLNNINAETKMENYGFPENGNVHGAVNTALPLTLSSGQPYTSVPQHGACEGNGTIPVVQICSPNTAFKAHYSLLGTVDENNPLSVRESIQDTSFSNGCAPQLSSPGGNPTIIAHSMIGNNGTPNKDVCKPTPSLRAIKKLNFDYDDRGENIGFPSKLAALLSMGENMSKMDNPCYGTSLAQFEESHQQNASEGKISIADLEFSEEDDVLSSAASVSCNDNCVMKIGASQQGTTVADLQQGFKQQMNGEFSMFAVDGNIKTQEMSNDCASNVTDNACAIRQNKRMHCEIGISEDGRVREEEKCSDVAIHVPRKSARIHNMKSEGVTCGMCVTAADSTRQDASGGSSSGTKKGEKLQGLWKGYQDDDDSELTELSDTDSDNDVQNCHGVRKTGSKTYSSVFFNPDYRQAKRLLADIPYRRWIPDTFNMEEHEGPFLPIVTRPPTVFMGGRRRRTYLRRSVTSIGPLSKLTYFKELLQSYVLRNSNCYLSIGWPAKHRVYIMSEEKLGYNHIPTLREMFPLPPGWMIVLGIVGSETPAALYKHMVVLLCENKWVLLHNYRDSKHELYFAASDLKQFMEEGLSRCDCIYYEKSVPYGVAMEDSVREFLRNSKTFQSLMEYRKNMHGSTWTFNGMPGRLGDRVIHICNPELVNSIPADEAIRYEGKPLYFFAFVTTFKSHPGSKANVLIAADKNLGIYGYHKGRPRIRYLCKNVQAFFRAGVRKMYLDYEIPSKTLLAVSEDDYLCILQKAPCLLLKPAVFRKTFSQEGK.

The segment at 783-802 (TRQDASGGSSSGTKKGEKLQ) is disordered.

This is an uncharacterized protein from Human herpesvirus 6B (strain Z29) (HHV-6 variant B).